Here is a 301-residue protein sequence, read N- to C-terminus: 4-hydroxy-tetrahydrodipicolinate synthase (301 aa).

Thr-57 lines the pyruvate pocket. Tyr-145 serves as the catalytic Proton donor/acceptor. The Schiff-base intermediate with substrate role is filled by Lys-173. Ile-213 lines the pyruvate pocket.

It belongs to the DapA family. As to quaternary structure, homotetramer; dimer of dimers.

The protein resides in the cytoplasm. The enzyme catalyses L-aspartate 4-semialdehyde + pyruvate = (2S,4S)-4-hydroxy-2,3,4,5-tetrahydrodipicolinate + H2O + H(+). It participates in amino-acid biosynthesis; L-lysine biosynthesis via DAP pathway; (S)-tetrahydrodipicolinate from L-aspartate: step 3/4. Its function is as follows. Catalyzes the condensation of (S)-aspartate-beta-semialdehyde [(S)-ASA] and pyruvate to 4-hydroxy-tetrahydrodipicolinate (HTPA). This is 4-hydroxy-tetrahydrodipicolinate synthase from Corynebacterium diphtheriae (strain ATCC 700971 / NCTC 13129 / Biotype gravis).